We begin with the raw amino-acid sequence, 360 residues long: Cyclin-D1-binding protein 1 (360 aa).

A2 carries the post-translational modification N-acetylalanine. 2 interaction with TCF3 regions span residues 2-184 (ASAT…VDFV) and 150-360 (ISYN…ELEL). Interaction with RPLP0 stretches follow at residues 2–190 (ASAT…AHEE) and 240–360 (LIIP…ELEL). The interval 2 to 208 (ASATAPAAAV…DPYSGLLNDT (207 aa)) is required for interaction with CCND1.

Belongs to the CCNDBP1 family. As to quaternary structure, interacts with CCND1 and GRAP2. May also interact with COPS5, RPLP0, SIRT6, SYF2 and TCF3. In terms of processing, phosphorylated.

It is found in the cytoplasm. It localises to the nucleus. May negatively regulate cell cycle progression. May act at least in part via inhibition of the cyclin-D1/CDK4 complex, thereby preventing phosphorylation of RB1 and blocking E2F-dependent transcription. This chain is Cyclin-D1-binding protein 1 (CCNDBP1), found in Pongo abelii (Sumatran orangutan).